Consider the following 291-residue polypeptide: 4-diphosphocytidyl-2-C-methyl-D-erythritol kinase (291 aa).

Lysine 10 is a catalytic residue. Position 94–104 (94–104 (PVSAGLAGGSS)) interacts with ATP. Aspartate 136 is an active-site residue.

Belongs to the GHMP kinase family. IspE subfamily.

It catalyses the reaction 4-CDP-2-C-methyl-D-erythritol + ATP = 4-CDP-2-C-methyl-D-erythritol 2-phosphate + ADP + H(+). The protein operates within isoprenoid biosynthesis; isopentenyl diphosphate biosynthesis via DXP pathway; isopentenyl diphosphate from 1-deoxy-D-xylulose 5-phosphate: step 3/6. Catalyzes the phosphorylation of the position 2 hydroxy group of 4-diphosphocytidyl-2C-methyl-D-erythritol. The polypeptide is 4-diphosphocytidyl-2-C-methyl-D-erythritol kinase (Listeria monocytogenes serotype 4a (strain HCC23)).